The following is a 231-amino-acid chain: S-norcoclaurine synthase 2 (231 aa).

107–109 provides a ligand contact to dopamine; the sequence is YKE. The active-site Proton donor is the K121. D140 is a (4-hydroxyphenyl)acetaldehyde binding site. Residues 210–230 form a helical membrane-spanning segment; it reads LLLCLIICLVIAGGMFVAGVP.

Belongs to the BetVI family. Expressed in roots, stems and leaves. Detected in flower buds and germinating seeds. Low expression in carpels. Restricted to sieve elements of the phloem adjacent or proximal to laticifers.

The protein localises to the endoplasmic reticulum membrane. It is found in the vacuole membrane. It catalyses the reaction (4-hydroxyphenyl)acetaldehyde + dopamine = (S)-norcoclaurine + H2O. It participates in alkaloid biosynthesis; (S)-reticuline biosynthesis. Activity doubles within 5 hours of elicitor treatment and continues to increase for at least 80 hours. Involved in the biosynthesis of (S)-coclaurine, the common precursor of all benzylisoquinoline alkaloids such as morphine, sanguinarine, codeine or papaverine. Condenses dopamine and 4-hydroxyphenylacetaldehyde. This chain is S-norcoclaurine synthase 2, found in Papaver somniferum (Opium poppy).